We begin with the raw amino-acid sequence, 436 residues long: UDP-N-acetylmuramoylalanine--D-glutamate ligase (436 aa).

112-118 (GSNGKST) is a binding site for ATP.

Belongs to the MurCDEF family.

Its subcellular location is the cytoplasm. The catalysed reaction is UDP-N-acetyl-alpha-D-muramoyl-L-alanine + D-glutamate + ATP = UDP-N-acetyl-alpha-D-muramoyl-L-alanyl-D-glutamate + ADP + phosphate + H(+). It functions in the pathway cell wall biogenesis; peptidoglycan biosynthesis. Its function is as follows. Cell wall formation. Catalyzes the addition of glutamate to the nucleotide precursor UDP-N-acetylmuramoyl-L-alanine (UMA). The sequence is that of UDP-N-acetylmuramoylalanine--D-glutamate ligase from Photorhabdus laumondii subsp. laumondii (strain DSM 15139 / CIP 105565 / TT01) (Photorhabdus luminescens subsp. laumondii).